The primary structure comprises 121 residues: Alpha-endosulfine (121 aa).

The interval 1–53 (MSQKQEEENPAEETGEEKQDTQEKEGILPERAEEAKLKAKYPSLGQKPGGSDF) is disordered. Ser2 carries the N-acetylserine modification. Position 2 is a phosphoserine (Ser2). Residues 16–37 (EEKQDTQEKEGILPERAEEAKL) show a composition bias toward basic and acidic residues. Thr21 carries the phosphothreonine modification. Position 43 is a phosphoserine (Ser43). Ser67 is subject to Phosphoserine; by GWL. A disordered region spans residues 79 to 121 (NKQLPSAGPDKNLVTGDHIPTPQDLPQRKSSLVTSKLAGGQVE). Residue Ser109 is modified to Phosphoserine; by PKA.

It belongs to the endosulfine family. In terms of assembly, interacts (when phosphorylated at Ser-67) with PPP2R2D. Interacts with ABCC8. Interacts with SNCA; interaction is disrupted when phosphorylated at Ser-109. Phosphorylation at Ser-67 by GWL during mitosis is essential for interaction with PPP2R2D (PR55-delta) and subsequent inactivation of PP2A. Phosphorylated by PKA. As to expression, widely expressed with high levels in skeletal muscle and brain and lower levels in the pancreas.

It is found in the cytoplasm. In terms of biological role, protein phosphatase inhibitor that specifically inhibits protein phosphatase 2A (PP2A) during mitosis. When phosphorylated at Ser-67 during mitosis, specifically interacts with PPP2R2D (PR55-delta) and inhibits its activity, leading to inactivation of PP2A, an essential condition to keep cyclin-B1-CDK1 activity high during M phase. Also acts as a stimulator of insulin secretion by interacting with sulfonylurea receptor (ABCC8), thereby preventing sulfonylurea from binding to its receptor and reducing K(ATP) channel currents. This Homo sapiens (Human) protein is Alpha-endosulfine (ENSA).